We begin with the raw amino-acid sequence, 164 residues long: Protein-export protein SecB (164 aa).

The protein belongs to the SecB family. In terms of assembly, homotetramer, a dimer of dimers. One homotetramer interacts with 1 SecA dimer.

Its subcellular location is the cytoplasm. Functionally, one of the proteins required for the normal export of preproteins out of the cell cytoplasm. It is a molecular chaperone that binds to a subset of precursor proteins, maintaining them in a translocation-competent state. It also specifically binds to its receptor SecA. The polypeptide is Protein-export protein SecB (Zymomonas mobilis subsp. mobilis (strain ATCC 31821 / ZM4 / CP4)).